Reading from the N-terminus, the 423-residue chain is Glycine-rich protein 1 (423 aa).

Residues 1–20 form the signal peptide; that stretch reads MKKICLTFVFLLSLFPIYSS. 4 disordered regions span residues 28–47, 78–133, 159–219, and 236–288; these read TIESGSSKSSGSSVGNAGPA, DDDN…SKKN, KGGS…GAGA, and GASA…ASAG. Residues 31-42 are compositionally biased toward low complexity; it reads SGSSKSSGSSVG. Basic and acidic residues-rich tracts occupy residues 81 to 93 and 102 to 111; these read NKDKKKNDEDGKT and QNGDDVKSDN. A compositionally biased stretch (gly residues) spans 159–172; the sequence is KGGSANNGGEGGAT. Residues 173–183 are compositionally biased toward low complexity; the sequence is SAGSAGATSGA. Composition is skewed to gly residues over residues 205-219 and 236-247; these read GAGGESGGAGAGAGA and GASAGAGAGGAQ. The span at 248–284 shows a compositional bias: low complexity; the sequence is GDAEAASAGSTAGSTSSGGAAASGASSGAGSSDSGQG.

As to expression, nacreous layer of shell (at protein level).

The protein resides in the secreted. The sequence is that of Glycine-rich protein 1 from Pinctada maxima (Silver-lipped pearl oyster).